The primary structure comprises 182 residues: Large ribosomal subunit protein uL5c (182 aa).

The protein belongs to the universal ribosomal protein uL5 family. As to quaternary structure, part of the 50S ribosomal subunit; contacts the 5S rRNA.

It localises to the plastid. Its subcellular location is the chloroplast. Its function is as follows. Binds 5S rRNA, forms part of the central protuberance of the 50S subunit. The sequence is that of Large ribosomal subunit protein uL5c (rpl5) from Cyanidium caldarium (Red alga).